Reading from the N-terminus, the 174-residue chain is Anthrone oxygenase CPUR_05435 (174 aa).

4 helical membrane-spanning segments follow: residues 13 to 33 (VALA…AIMI), 56 to 76 (YGSV…GFAS), 88 to 108 (CLAA…AMIP), and 140 to 160 (WVVL…MGFT).

It belongs to the anthrone oxygenase family.

It is found in the membrane. It carries out the reaction emodin anthrone + O2 = emodin + H2O + H(+). Anthrone oxygenase; part of the ergochrome gene cluster responsible for the typical purple-black color of the ergot sclerotia. The ergochrome gene cluster produces several ergot pigments including the yellow ergochrome secalonic acid and its derivatives, as well as the red anthraquinones endocrocin and clavorubin. The pathway begins with the synthesis of atrochrysone thioester by the polyketide synthase (PKS) CPUR_05437. The atrochrysone carboxyl ACP thioesterase CPUR_05436 then breaks the thioester bond and releases the atrochrysone carboxylic acid from CPUR_05437. The decarboxylase CPUR_05434 then catalyzes the concerted decarboxylation-elimination required to convert atochrysone carboxylic acid into emodin anthrone, which is further oxidized to emodin by the anthrone oxygenase CPUR_05435. Emodin is further modified to yield monodictyphenone via several steps involving CPUR_05427, CPUR_05428, CPUR_05429 and CPUR_05430. The short chain dehydrogenase/reductase CPUR_05418 then catalyzes the C-5 ketoreduction to give the xanthone skeleton of the monomeric units. Ergochromes formation requires further dimerization steps of different xanthone units, probably catalyzed by the cytochrome P450 monooxygenase CPUR_05419. CPUR_05425, CPUR_05426 and CPUR_05431 are unique to Claviceps, thus it is likely that they are involved in further modification of xanthone units or in their dimerization. The yellow ergochromes and the red anthraquinone pigments endocrocin and clavorubin are products from the same PKS derived precursors and the latter are likely shunt products in the pathway of xanthone biosynthesis. It is proposed that atrochrysone carboxylic acid released from the PKS CPUR_05437 can also be converted to endocrocin anthrone which is further oxidized into endocrocin by CPUR_05435. Endocrocin could be then modified to clavorubin, possibly by CPUR_05423 and CPUR_05431. Clavorubin is the principal anthraquinone metabolite produced by the cluster with a much higher yield compared to endocrocin. This chain is Anthrone oxygenase CPUR_05435, found in Claviceps purpurea (strain 20.1) (Ergot fungus).